Consider the following 358-residue polypeptide: Ribosomal RNA large subunit methyltransferase M (358 aa).

S-adenosyl-L-methionine is bound by residues Ser183, 216–219, Asp235, Asp255, and Asp271; that span reads APGG. Lys300 serves as the catalytic Proton acceptor.

This sequence belongs to the class I-like SAM-binding methyltransferase superfamily. RNA methyltransferase RlmE family. RlmM subfamily. Monomer.

It localises to the cytoplasm. The catalysed reaction is cytidine(2498) in 23S rRNA + S-adenosyl-L-methionine = 2'-O-methylcytidine(2498) in 23S rRNA + S-adenosyl-L-homocysteine + H(+). In terms of biological role, catalyzes the 2'-O-methylation at nucleotide C2498 in 23S rRNA. The polypeptide is Ribosomal RNA large subunit methyltransferase M (Pseudomonas fluorescens (strain SBW25)).